We begin with the raw amino-acid sequence, 152 residues long: SsrA-binding protein (152 aa).

Belongs to the SmpB family.

The protein resides in the cytoplasm. Its function is as follows. Required for rescue of stalled ribosomes mediated by trans-translation. Binds to transfer-messenger RNA (tmRNA), required for stable association of tmRNA with ribosomes. tmRNA and SmpB together mimic tRNA shape, replacing the anticodon stem-loop with SmpB. tmRNA is encoded by the ssrA gene; the 2 termini fold to resemble tRNA(Ala) and it encodes a 'tag peptide', a short internal open reading frame. During trans-translation Ala-aminoacylated tmRNA acts like a tRNA, entering the A-site of stalled ribosomes, displacing the stalled mRNA. The ribosome then switches to translate the ORF on the tmRNA; the nascent peptide is terminated with the 'tag peptide' encoded by the tmRNA and targeted for degradation. The ribosome is freed to recommence translation, which seems to be the essential function of trans-translation. The protein is SsrA-binding protein of Sulfurihydrogenibium sp. (strain YO3AOP1).